The sequence spans 287 residues: Phosphatidylserine decarboxylase proenzyme (287 aa).

Catalysis depends on charge relay system; for autoendoproteolytic cleavage activity residues Asp90, His147, and Ser253. Catalysis depends on Ser253, which acts as the Schiff-base intermediate with substrate; via pyruvic acid; for decarboxylase activity. Ser253 is subject to Pyruvic acid (Ser); by autocatalysis.

Belongs to the phosphatidylserine decarboxylase family. PSD-B subfamily. Prokaryotic type I sub-subfamily. Heterodimer of a large membrane-associated beta subunit and a small pyruvoyl-containing alpha subunit. It depends on pyruvate as a cofactor. In terms of processing, is synthesized initially as an inactive proenzyme. Formation of the active enzyme involves a self-maturation process in which the active site pyruvoyl group is generated from an internal serine residue via an autocatalytic post-translational modification. Two non-identical subunits are generated from the proenzyme in this reaction, and the pyruvate is formed at the N-terminus of the alpha chain, which is derived from the carboxyl end of the proenzyme. The autoendoproteolytic cleavage occurs by a canonical serine protease mechanism, in which the side chain hydroxyl group of the serine supplies its oxygen atom to form the C-terminus of the beta chain, while the remainder of the serine residue undergoes an oxidative deamination to produce ammonia and the pyruvoyl prosthetic group on the alpha chain. During this reaction, the Ser that is part of the protease active site of the proenzyme becomes the pyruvoyl prosthetic group, which constitutes an essential element of the active site of the mature decarboxylase.

The protein resides in the cell membrane. It catalyses the reaction a 1,2-diacyl-sn-glycero-3-phospho-L-serine + H(+) = a 1,2-diacyl-sn-glycero-3-phosphoethanolamine + CO2. Its pathway is phospholipid metabolism; phosphatidylethanolamine biosynthesis; phosphatidylethanolamine from CDP-diacylglycerol: step 2/2. In terms of biological role, catalyzes the formation of phosphatidylethanolamine (PtdEtn) from phosphatidylserine (PtdSer). The chain is Phosphatidylserine decarboxylase proenzyme from Aliivibrio salmonicida (strain LFI1238) (Vibrio salmonicida (strain LFI1238)).